Here is a 353-residue protein sequence, read N- to C-terminus: Fe(3+) ions import ATP-binding protein FbpC (353 aa).

Residues 9–239 enclose the ABC transporter domain; that stretch reads VTFENVTKKF…PASAFIADFM (231 aa). 41 to 48 lines the ATP pocket; it reads GPSGCGKT.

It belongs to the ABC transporter superfamily. Fe(3+) ion importer (TC 3.A.1.10) family. In terms of assembly, the complex is composed of two ATP-binding proteins (FbpC), two transmembrane proteins (FbpB) and a solute-binding protein (FbpA).

It is found in the cell inner membrane. The enzyme catalyses Fe(3+)(out) + ATP + H2O = Fe(3+)(in) + ADP + phosphate + H(+). Its function is as follows. Part of the ABC transporter complex FbpABC involved in Fe(3+) ions import. Responsible for energy coupling to the transport system. The chain is Fe(3+) ions import ATP-binding protein FbpC from Brucella suis biovar 1 (strain 1330).